An 834-amino-acid chain; its full sequence is Protein ROOT HAIR DEFECTIVE 3 homolog 2 (834 aa).

Residues 1-683 (MGENDDGCST…EAHKRNNNWL (683 aa)) are Cytoplasmic-facing. Positions 37-252 (GLSYAVVAIM…ISPGGLAGDR (216 aa)) constitute a GB1/RHD3-type G domain. Position 47–54 (47–54 (GPQSSGKS)) interacts with GTP. Residues 214–241 (MIVALSSYEEKEKQFEQEVAELRQRFFH) are a coiled coil. Residues 684-704 (PPAWAIVLMIVLGFNEFMMLL) traverse the membrane as a helical segment. At 705 to 707 (KNP) the chain is on the lumenal side. Residues 708–728 (LYLLGFFVAFLLSKALWVQLD) traverse the membrane as a helical segment. Residues 729–834 (IPREFQHGAV…NVQESEISQM (106 aa)) lie on the Cytoplasmic side of the membrane. Residues 767 to 783 (TTQEVPDLSASQTYRQQ) show a composition bias toward polar residues. Residues 767–834 (TTQEVPDLSA…NVQESEISQM (68 aa)) are disordered. Residues 784–803 (SPSHSISSTISESVASNISS) are compositionally biased toward low complexity. Residues 823-834 (TNNVQESEISQM) show a composition bias toward polar residues.

It belongs to the TRAFAC class dynamin-like GTPase superfamily. GB1/RHD3 GTPase family. RHD3 subfamily. As to expression, expressed in roots, leaves, stems and flowers.

The protein resides in the endoplasmic reticulum membrane. Its function is as follows. Probable GTP-binding protein that may be involved in cell development. The chain is Protein ROOT HAIR DEFECTIVE 3 homolog 2 from Arabidopsis thaliana (Mouse-ear cress).